Reading from the N-terminus, the 73-residue chain is Putative defensin-like protein 277 (73 aa).

A signal peptide spans methionine 1 to alanine 24. 4 disulfides stabilise this stretch: cysteine 27-cysteine 64, cysteine 33-cysteine 52, cysteine 39-cysteine 62, and cysteine 43-cysteine 63.

It belongs to the DEFL family.

Its subcellular location is the secreted. The protein is Putative defensin-like protein 277 of Arabidopsis thaliana (Mouse-ear cress).